The chain runs to 144 residues: Large ribosomal subunit protein uL11 (144 aa).

Belongs to the universal ribosomal protein uL11 family. Part of the ribosomal stalk of the 50S ribosomal subunit. Interacts with L10 and the large rRNA to form the base of the stalk. L10 forms an elongated spine to which L12 dimers bind in a sequential fashion forming a multimeric L10(L12)X complex. Post-translationally, one or more lysine residues are methylated.

Its function is as follows. Forms part of the ribosomal stalk which helps the ribosome interact with GTP-bound translation factors. This Rhodococcus erythropolis (strain PR4 / NBRC 100887) protein is Large ribosomal subunit protein uL11.